Here is a 206-residue protein sequence, read N- to C-terminus: Small ribosomal subunit protein uS4 (206 aa).

A disordered region spans residues 28–52 (YLDRRPYAPGQHGQRRGRGRPSDYS). In terms of domain architecture, S4 RNA-binding spans 96–171 (RRLDNVVFRM…QKRRRVSPWI (76 aa)).

This sequence belongs to the universal ribosomal protein uS4 family. Part of the 30S ribosomal subunit. Contacts protein S5. The interaction surface between S4 and S5 is involved in control of translational fidelity.

In terms of biological role, one of the primary rRNA binding proteins, it binds directly to 16S rRNA where it nucleates assembly of the body of the 30S subunit. Its function is as follows. With S5 and S12 plays an important role in translational accuracy. The chain is Small ribosomal subunit protein uS4 from Deinococcus geothermalis (strain DSM 11300 / CIP 105573 / AG-3a).